The sequence spans 251 residues: Aspartate/glutamate leucyltransferase (251 aa).

It belongs to the R-transferase family. Bpt subfamily.

Its subcellular location is the cytoplasm. The catalysed reaction is N-terminal L-glutamyl-[protein] + L-leucyl-tRNA(Leu) = N-terminal L-leucyl-L-glutamyl-[protein] + tRNA(Leu) + H(+). It catalyses the reaction N-terminal L-aspartyl-[protein] + L-leucyl-tRNA(Leu) = N-terminal L-leucyl-L-aspartyl-[protein] + tRNA(Leu) + H(+). Functions in the N-end rule pathway of protein degradation where it conjugates Leu from its aminoacyl-tRNA to the N-termini of proteins containing an N-terminal aspartate or glutamate. This is Aspartate/glutamate leucyltransferase from Stenotrophomonas maltophilia (strain K279a).